The primary structure comprises 564 residues: Lamassu protein LmuB (564 aa).

In terms of biological role, component of antiviral defense system Lamassu type II, composed of LmuA and LmuB. Expression of Lamassu type II in B.subtilis (strain BEST7003) confers resistance to phage SpBeta. May be an ATPase. This chain is Lamassu protein LmuB, found in Bacillus cereus (strain VD014).